A 468-amino-acid chain; its full sequence is Protein DML1 (468 aa).

This sequence belongs to the misato family.

The protein resides in the mitochondrion. In terms of biological role, involved in the partitioning of the mitochondrial organelle and mitochondrial DNA (mtDNA) inheritance. The protein is Protein DML1 (DML1) of Kluyveromyces lactis (strain ATCC 8585 / CBS 2359 / DSM 70799 / NBRC 1267 / NRRL Y-1140 / WM37) (Yeast).